The sequence spans 414 residues: MASAEIIAVGTELLLGQIVNSNAAFISQELAADGIYVYHHTVVGDNPTRLKEVIEIAEKRSDILIFTGGLGPTEDDITKQILADHLQKQLVEDEYHMNKINEYFASRNRTMTENNKLQAVIIKDSVVLNNDYGFAAGMYLKENNHTYVLLPGPPSEMKPMFTKYANPLLLSENGNQNILESKIMRFFGIGESQLAADLNDLIVNQVNPTIATYAGDNEVVVRITATAKTKEEASSLVKDTEEEILRRDGTFLYGYGEVSLPELVTAMLLEKELTISAAESFTAGLFQAEIARFPGISKIFKGGMVTYSEETKQSILQVSPQVIKEKGVVSAECAKEMAENVSRLCKTDIGISFTGVAGPDSLEGHPAGTIWIGLSVKGHETEAFQFVYGRDRNHNRRRAVKQGFQLIKQFLDAN.

The protein belongs to the CinA family.

This chain is Putative competence-damage inducible protein, found in Listeria monocytogenes serovar 1/2a (strain ATCC BAA-679 / EGD-e).